Here is a 334-residue protein sequence, read N- to C-terminus: Heat-inducible transcription repressor HrcA (334 aa).

This sequence belongs to the HrcA family.

Functionally, negative regulator of class I heat shock genes (grpE-dnaK-dnaJ and groELS operons). Prevents heat-shock induction of these operons. This Acidovorax sp. (strain JS42) protein is Heat-inducible transcription repressor HrcA.